A 64-amino-acid polypeptide reads, in one-letter code: Conotoxin Am1.1 (64 aa).

A signal peptide spans 1–22 (MSCLPVFVILLLLTASGPSVDA). The propeptide occupies 23 to 49 (RLKTKDDVPLSSFRDNAKSTLRRLQDK). Proline 60 bears the 4-hydroxyproline; partial; in major form mark.

This sequence belongs to the conotoxin T superfamily. Contains 2 disulfide bonds. Expressed by the venom duct.

It localises to the secreted. Functionally, probable toxin that inhibits ion channels. This chain is Conotoxin Am1.1, found in Conus amadis (Amadis cone).